The following is a 247-amino-acid chain: Triosephosphate isomerase (247 aa).

9–11 lines the substrate pocket; sequence NWK. His-94 acts as the Electrophile in catalysis. The active-site Proton acceptor is Glu-165. Substrate contacts are provided by residues Gly-171, Ser-209, and 230–231; that span reads GG.

The protein belongs to the triosephosphate isomerase family. As to quaternary structure, homodimer.

It localises to the cytoplasm. The enzyme catalyses D-glyceraldehyde 3-phosphate = dihydroxyacetone phosphate. It functions in the pathway carbohydrate biosynthesis; gluconeogenesis. Its pathway is carbohydrate degradation; glycolysis; D-glyceraldehyde 3-phosphate from glycerone phosphate: step 1/1. Involved in the gluconeogenesis. Catalyzes stereospecifically the conversion of dihydroxyacetone phosphate (DHAP) to D-glyceraldehyde-3-phosphate (G3P). The protein is Triosephosphate isomerase of Albidiferax ferrireducens (strain ATCC BAA-621 / DSM 15236 / T118) (Rhodoferax ferrireducens).